The following is a 437-amino-acid chain: MMSVTVETLENLERKVVLSLPWSEINAETDKKLKQTQRRAKIDGFRPGKAPLKMIAQMYGASAQNDVINELVQRRFHDVAVAQELKVAGFPRFEGVEEQDDKESFKVAAIFEVFPEVVIGDLSAQEVEKVTASVGDAEVDQTVEILRKQRTRFNHVEREARNSDRVIIDFEGKIDGEPFAGGASKNYAFVLGAGQMLPEFEAGVVGMKAGESKDVTVNFPEEYHGKDVAGKTAVFTITLNNVSEATLPEVDADFAKALGIADGDVAKMREEVQKNVSREVERRVNEQTKESVMNALLKAVELKAPVALVNEEAARLANEMKQNFVNQGMADAANLDLPLDIFKEQAERRVSLGLILAKLVDENKLEPTEEQVKAVVANFAESYEDPQEVIDWYYAEPSRLQAPTSLAIESNVVDFVLGKAKVNEKALSFDEVMGAQA.

A PPIase FKBP-type domain is found at 163–248 (SDRVIIDFEG…LNNVSEATLP (86 aa)).

It belongs to the FKBP-type PPIase family. Tig subfamily.

It is found in the cytoplasm. It catalyses the reaction [protein]-peptidylproline (omega=180) = [protein]-peptidylproline (omega=0). Functionally, involved in protein export. Acts as a chaperone by maintaining the newly synthesized protein in an open conformation. Functions as a peptidyl-prolyl cis-trans isomerase. The protein is Trigger factor of Neisseria meningitidis serogroup C / serotype 2a (strain ATCC 700532 / DSM 15464 / FAM18).